Consider the following 201-residue polypeptide: ADP-ribosylation factor-like protein 4D (201 aa).

The N-myristoyl glycine moiety is linked to residue glycine 2. Residues 28-35 (GLDSAGKT), 76-80 (DVGGQ), and 135-138 (NKQD) contribute to the GTP site.

Belongs to the small GTPase superfamily. Arf family. In terms of assembly, interacts with CYTH2; the interaction is direct and ARL4D GTP-dependent. Does not interact with ARL4D.

It is found in the nucleus. The protein localises to the nucleolus. The protein resides in the cell membrane. Its subcellular location is the cytoplasm. Its function is as follows. Small GTP-binding protein which cycles between an inactive GDP-bound and an active GTP-bound form, and the rate of cycling is regulated by guanine nucleotide exchange factors (GEF) and GTPase-activating proteins (GAP). GTP-binding protein that does not act as an allosteric activator of the cholera toxin catalytic subunit. Recruits CYTH1, CYTH2, CYTH3 and CYTH4 to the plasma membrane in GDP-bound form. The polypeptide is ADP-ribosylation factor-like protein 4D (Arl4d) (Mus musculus (Mouse)).